A 21-amino-acid polypeptide reads, in one-letter code: 20 kDa chaperonin, chloroplastic (21 aa).

The protein belongs to the GroES chaperonin family. In terms of assembly, forms stable complexes with CPN60 in the presence of ATP.

The protein resides in the plastid. It is found in the chloroplast. Functionally, seems to function only as a co-chaperone, along with cpn60, and in certain cases is essential for the discharge of biologically active proteins from cpn60. The polypeptide is 20 kDa chaperonin, chloroplastic (CPN21) (Pisum sativum (Garden pea)).